The following is a 130-amino-acid chain: Large ribosomal subunit protein bL19 (130 aa).

This sequence belongs to the bacterial ribosomal protein bL19 family.

Functionally, this protein is located at the 30S-50S ribosomal subunit interface and may play a role in the structure and function of the aminoacyl-tRNA binding site. In Methylorubrum populi (strain ATCC BAA-705 / NCIMB 13946 / BJ001) (Methylobacterium populi), this protein is Large ribosomal subunit protein bL19.